Reading from the N-terminus, the 254-residue chain is Phosphoribosylaminoimidazole-succinocarboxamide synthase (254 aa).

The protein belongs to the SAICAR synthetase family.

It catalyses the reaction 5-amino-1-(5-phospho-D-ribosyl)imidazole-4-carboxylate + L-aspartate + ATP = (2S)-2-[5-amino-1-(5-phospho-beta-D-ribosyl)imidazole-4-carboxamido]succinate + ADP + phosphate + 2 H(+). Its pathway is purine metabolism; IMP biosynthesis via de novo pathway; 5-amino-1-(5-phospho-D-ribosyl)imidazole-4-carboxamide from 5-amino-1-(5-phospho-D-ribosyl)imidazole-4-carboxylate: step 1/2. This Brucella abortus (strain S19) protein is Phosphoribosylaminoimidazole-succinocarboxamide synthase.